The following is a 299-amino-acid chain: Telomere repeat-binding factor 2 (299 aa).

The HTH myb-type domain maps to 1-61 (MGAPKQKWTP…KWRNISVTAL (61 aa)). The segment at residues 28-57 (WRTILSDTEFSLILKSRSNVDLKDKWRNIS) is a DNA-binding region (H-T-H motif). A disordered region spans residues 93–116 (LTNDDERAKPTSPGGSGGGSPRTC). The H15 domain maps to 121–189 (SITSLDKIIF…KIKHKYRFSS (69 aa)). Positions 243–288 (EAAEAAARAVAEAEFAITEAEQAAKEAERAEAEAEAAQIFAKAAMK) form a coiled coil.

It belongs to the histone H1/H5 family. SMH subfamily. Forms a homodimer and heterodimers with TRB1 or TRB3. Interacts with TRB1 and TRB3. In terms of tissue distribution, ubiquitous.

The protein resides in the nucleus. It is found in the nucleolus. It localises to the chromosome. Functionally, binds preferentially double-stranded telomeric repeats, but it can also bind to the single G-rich telomeric strand. The protein is Telomere repeat-binding factor 2 (TRB2) of Arabidopsis thaliana (Mouse-ear cress).